A 478-amino-acid chain; its full sequence is Glutamate--tRNA ligase (478 aa).

The 'HIGH' region motif lies at 9-19 (PSPTGLLHIGT). Positions 248–252 (KLSKR) match the 'KMSKS' region motif. Lys-251 provides a ligand contact to ATP.

Belongs to the class-I aminoacyl-tRNA synthetase family. Glutamate--tRNA ligase type 1 subfamily. Monomer.

Its subcellular location is the cytoplasm. The enzyme catalyses tRNA(Glu) + L-glutamate + ATP = L-glutamyl-tRNA(Glu) + AMP + diphosphate. Functionally, catalyzes the attachment of glutamate to tRNA(Glu) in a two-step reaction: glutamate is first activated by ATP to form Glu-AMP and then transferred to the acceptor end of tRNA(Glu). This chain is Glutamate--tRNA ligase, found in Prochlorococcus marinus subsp. pastoris (strain CCMP1986 / NIES-2087 / MED4).